The following is a 195-amino-acid chain: tRNA (pseudouridine(54)-N(1))-methyltransferase (195 aa).

S-adenosyl-L-methionine is bound at residue Leu129.

This sequence belongs to the methyltransferase superfamily. TrmY family. In terms of assembly, homodimer.

The protein resides in the cytoplasm. It carries out the reaction pseudouridine(54) in tRNA + S-adenosyl-L-methionine = N(1)-methylpseudouridine(54) in tRNA + S-adenosyl-L-homocysteine + H(+). Specifically catalyzes the N1-methylation of pseudouridine at position 54 (Psi54) in tRNAs. The sequence is that of tRNA (pseudouridine(54)-N(1))-methyltransferase from Methanocorpusculum labreanum (strain ATCC 43576 / DSM 4855 / Z).